The sequence spans 322 residues: Olfactory receptor 5P2 (322 aa).

Over 1–28 the chain is Extracellular; sequence MNSLKDGNHTALTGFILLGLTDDPILRV. A glycan (N-linked (GlcNAc...) asparagine) is linked at N8. The chain crosses the membrane as a helical span at residues 29–42; sequence ILFMIILSGNLSII. Topologically, residues 43–50 are cytoplasmic; that stretch reads ILIRISSQ. The chain crosses the membrane as a helical span at residues 51-71; that stretch reads LHHPMYFFLSHLAFADMAYSS. At 72-95 the chain is on the extracellular side; it reads SVTPNMLVNFLVERNTVSYLGCAI. Residues C93 and C185 are joined by a disulfide bond. The helical transmembrane segment at 96 to 116 threads the bilayer; the sequence is QLGSAAFFATVECVLLAAMAY. Topologically, residues 117–135 are cytoplasmic; it reads DRFVAICSPLLYSTKMSTQ. A helical membrane pass occupies residues 136-156; the sequence is VSVQLLLVVYIAGFLIAVSYT. Over 157–192 the chain is Extracellular; that stretch reads TSFYFLLFCGPNQVNHFFCDFAPLLELSCSDISVST. The chain crosses the membrane as a helical span at residues 193-213; that stretch reads VVLSFSSGSIIVVTVCVIAVC. Over 214–233 the chain is Cytoplasmic; that stretch reads YIYILITILKMRSTEGHHKA. The chain crosses the membrane as a helical span at residues 234–254; sequence FSTCTSHLTVVTLFYGTITFI. At 255–267 the chain is on the extracellular side; sequence YVMPNFSYSTDQN. N259 is a glycosylation site (N-linked (GlcNAc...) asparagine). Residues 268 to 288 traverse the membrane as a helical segment; it reads KVVSVLYTVVIPMLNPLIYSL. At 289-322 the chain is on the cytoplasmic side; sequence RNKEIKGALKRELVRKILSHDACYFSRTSNNDIT.

It belongs to the G-protein coupled receptor 1 family. Expressed in the tongue.

It is found in the cell membrane. In terms of biological role, odorant receptor (Potential). May be involved in taste perception. The protein is Olfactory receptor 5P2 (OR5P2) of Homo sapiens (Human).